Reading from the N-terminus, the 305-residue chain is Acetyl-coenzyme A carboxylase carboxyl transferase subunit beta (305 aa).

In terms of domain architecture, CoA carboxyltransferase N-terminal spans 25–293; that stretch reads LWVQCPACQQ…LPKVESVASL (269 aa). Zn(2+)-binding residues include C29, C32, C48, and C51. The C4-type zinc-finger motif lies at 29-51; the sequence is CPACQQMIFARDLEKNQRVCTHC.

Belongs to the AccD/PCCB family. Acetyl-CoA carboxylase is a heterohexamer composed of biotin carboxyl carrier protein (AccB), biotin carboxylase (AccC) and two subunits each of ACCase subunit alpha (AccA) and ACCase subunit beta (AccD). It depends on Zn(2+) as a cofactor.

The protein resides in the cytoplasm. It carries out the reaction N(6)-carboxybiotinyl-L-lysyl-[protein] + acetyl-CoA = N(6)-biotinyl-L-lysyl-[protein] + malonyl-CoA. It participates in lipid metabolism; malonyl-CoA biosynthesis; malonyl-CoA from acetyl-CoA: step 1/1. Functionally, component of the acetyl coenzyme A carboxylase (ACC) complex. Biotin carboxylase (BC) catalyzes the carboxylation of biotin on its carrier protein (BCCP) and then the CO(2) group is transferred by the transcarboxylase to acetyl-CoA to form malonyl-CoA. This Granulibacter bethesdensis (strain ATCC BAA-1260 / CGDNIH1) protein is Acetyl-coenzyme A carboxylase carboxyl transferase subunit beta.